The primary structure comprises 1068 residues: Receptor-like protein 13 (1068 aa).

The N-terminal stretch at 1–23 is a signal peptide; that stretch reads MEGKLFLGQYLICVILLLGQLHG. At 24–986 the chain is on the extracellular side; the sequence is YKSCIEKERK…EADESTVDME (963 aa). Residues Asn-59 and Asn-97 are each glycosylated (N-linked (GlcNAc...) asparagine). LRR repeat units follow at residues 104-129, 139-162, 164-187, 188-212, 216-239, 241-264, 265-290, 292-315, 325-349, 350-373, 375-397, 398-423, 424-447, 448-471, 472-497, 499-517, 519-543, 544-567, and 569-594; these read FEDVRSLDLSSSRSCEDCGFSGLFDD, LRNLEILDLSSHRFNNSIFPFLNA, TSLTTLFLTYNNMHSPFLVKEFKD, LTNLEHLDLRGNRFNGSIPTQDYNS, FRKLEILDLSDNLFNSRIFPFLNS, TSLKSLSLWGNNMGGPFPAKELRD, LTNVELLDLSRNRFNGSIPVRALFAL, KLKALDLSDNEFSSSVELQGKFAK, WKNMEELKLSNNKLAGQFPLCLTSL, TGLRVLDLSSNQLTGNVPSALANL, SLEYLSLFGNNFEGFFSLGLLAN, LSKLKVLRLDSQSNSLEVEFETSWKP, KFQLVVIALRSCNLEKVPHFLLHQ, KDLHHVDLSDNQIHGNFPSWLLEN, NTKLEVLLLQNNSFTSFQLPKSAHNL, FLNVSVNKFNHLFLQNFGW, LPHLVCVNLAYNGFQGNLPSSLDNM, KSIEFLDLSHNRFHGKLPRRFLKG, and YNLTILKLSHNKLSGEVFPEAANFTR. Residue Asn-153 is glycosylated (N-linked (GlcNAc...) asparagine). The N-linked (GlcNAc...) asparagine glycan is linked to Asn-202. The N-linked (GlcNAc...) asparagine glycan is linked to Asn-279. Asn-397 carries N-linked (GlcNAc...) asparagine glycosylation. 3 N-linked (GlcNAc...) asparagine glycosylation sites follow: Asn-471, Asn-482, and Asn-501. Asn-570 and Asn-591 each carry an N-linked (GlcNAc...) asparagine glycan. One copy of the LRR 20; degenerate repeat lies at 596–615; that stretch reads WVMSMDNNLFTGNIGKGFRS. LRR repeat units lie at residues 616–639, 641–664, 665–688, 690–710, and 711–734; these read LPSLNVLDISNNKLTGVIPSWIGE, QGLFALQLSNNMLEGEIPTSLFNI, SYLQLLDLSSNRLSGDIPPHVSSI, HGAVLLLQNNNLSGVIPDTLL, and LNVIVLDLRNNRLSGNLPEFINTQ. Residue Asn-663 is glycosylated (N-linked (GlcNAc...) asparagine). A glycan (N-linked (GlcNAc...) asparagine) is linked at Asn-700. N-linked (GlcNAc...) asparagine glycosylation is found at Asn-735, Asn-745, Asn-771, Asn-780, and Asn-822. 2 LRR repeats span residues 736-757 and 758-781; these read ISILLLRGNNFTGQIPHQFCSL and SNIQLLDLSNNKFNGSIPSCLSNT. 4 LRR repeats span residues 846–870, 871–893, 895–918, and 920–943; these read LKLLFGMDLSENELSGEIPVELGGL, VELEALNLSHNNLSGVILESFSG, KNVESLDLSFNRLQGPIPLQLTDM, and SLAVFNVSYNNLSGIVPQGRQFNT. Asn-877 and Asn-882 each carry an N-linked (GlcNAc...) asparagine glycan. Residues Asn-925 and Asn-930 are each glycosylated (N-linked (GlcNAc...) asparagine). The helical transmembrane segment at 987–1007 threads the bilayer; sequence SFYWSFVAAYVTILLGILASL. The Cytoplasmic portion of the chain corresponds to 1008–1068; sequence SFDSPWSRAW…PPALFHKTRT (61 aa).

This sequence belongs to the RLP family.

It is found in the cell membrane. The chain is Receptor-like protein 13 from Arabidopsis thaliana (Mouse-ear cress).